Consider the following 625-residue polypeptide: Endo-1,4-beta-xylanase A (625 aa).

The signal sequence occupies residues 1 to 19 (MKLFQIFPLLLSLTSVTLA). In terms of domain architecture, GH11 1 spans 35–231 (VSTGHDVKKI…TGGGCSGSVE (197 aa)). Residues 245-283 (DGKSKGGSSSGGSNGQGLGNGQGNGQGQGNGQGQSATGS) are disordered. Residues 252 to 276 (SSSGGSNGQGLGNGQGNGQGQGNGQ) are compositionally biased toward gly residues. The tract at residues 255-279 (GGSNGQGLGNGQGNGQGQGNGQGQS) is linker. 2 repeat units span residues 259 to 268 (GQGLGNGQGN) and 269 to 278 (GQGQGNGQGQ). The segment at 259–278 (GQGLGNGQGNGQGQGNGQGQ) is 2 X 10 AA tandem repeats of G-Q-G-[LQ]-G-N-G-Q-G-[NQ]. CBM10 domains lie at 285-324 (KCPSTITSQGYKCCSSNCDIIYRDQSGDWGVENDEWCGCG) and 332-371 (NCPSSIKNQGYKCCSDSCEIVLTDSDGDWGIENDEWCGCG). Residues 374–403 (NTTPTTTTKKSNNSQPTQGQSNNNSSTNTN) form a linker region. The interval 379 to 399 (TTTKKSNNSQPTQGQSNNNSS) is disordered. The region spanning 416–617 (TETSNKVGSI…GSGTSGTADF (202 aa)) is the GH11 2 domain. Catalysis depends on E510, which acts as the Nucleophile. The active-site Proton donor is E603.

This sequence belongs to the glycosyl hydrolase 11 (cellulase G) family.

The catalysed reaction is Endohydrolysis of (1-&gt;4)-beta-D-xylosidic linkages in xylans.. The protein operates within glycan degradation; xylan degradation. Its function is as follows. Hydrolyzes 1,4-beta linked polysaccharide backbones of xylans, one of the major hemicellulose components in hardwoods and softwoods. It is more active against xylopentaose than xylotetraose, has trace activity against xylotriose. The major products released from hydrolysis of xylooligosaccharides are xylobiose and xylotriose. The reiterated 40 AA domain is involved in binding the cellulase-hemicellulase complex. The sequence is that of Endo-1,4-beta-xylanase A (XYNA) from Piromyces sp.